The following is a 515-amino-acid chain: RNA-binding region-containing protein 3 (515 aa).

Positions M1–D26 are disordered. S21 carries the post-translational modification Phosphoserine. The 76-residue stretch at R27–E102 folds into the RRM 1 domain. Disordered stretches follow at residues H107–E133, L215–R254, and E337–N369. A Phosphoserine modification is found at S108. Residues A115–E133 show a composition bias toward basic and acidic residues. A compositionally biased stretch (pro residues) spans P218–P230. The segment covering E337–D348 has biased composition (basic and acidic residues). The residue at position 349 (S349) is a Phosphoserine. The RRM 2 domain occupies C419–S502.

As to quaternary structure, component of the U11/U12 snRNPs that are part of the U12-type spliceosome. Found in a complex with m(7)G-capped U12 snRNA. Interacts with PDCD7.

The protein localises to the nucleus. Functionally, participates in pre-mRNA U12-dependent splicing, performed by the minor spliceosome which removes U12-type introns. U12-type introns comprises less than 1% of all non-coding sequences. Binds to the 3'-stem-loop of m(7)G-capped U12 snRNA. This is RNA-binding region-containing protein 3 (Rnpc3) from Rattus norvegicus (Rat).